The chain runs to 331 residues: Phenylalanine--tRNA ligase alpha subunit (331 aa).

Position 254 (glutamate 254) interacts with Mg(2+).

The protein belongs to the class-II aminoacyl-tRNA synthetase family. Phe-tRNA synthetase alpha subunit type 1 subfamily. In terms of assembly, tetramer of two alpha and two beta subunits. Mg(2+) serves as cofactor.

It is found in the cytoplasm. It carries out the reaction tRNA(Phe) + L-phenylalanine + ATP = L-phenylalanyl-tRNA(Phe) + AMP + diphosphate + H(+). In Blochmanniella pennsylvanica (strain BPEN), this protein is Phenylalanine--tRNA ligase alpha subunit.